The following is a 359-amino-acid chain: tRNA-specific 2-thiouridylase MnmA (359 aa).

Residues 9–16 and M35 each bind ATP; that span reads GISGGVDS. The segment at 95-97 is interaction with target base in tRNA; the sequence is NPD. The Nucleophile role is filled by C100. C100 and C197 are oxidised to a cystine. Position 124 (G124) interacts with ATP. The tract at residues 147–149 is interaction with tRNA; that stretch reads KDQ. C197 (cysteine persulfide intermediate) is an active-site residue. The interval 309–310 is interaction with tRNA; sequence RY.

It belongs to the MnmA/TRMU family.

Its subcellular location is the cytoplasm. It carries out the reaction S-sulfanyl-L-cysteinyl-[protein] + uridine(34) in tRNA + AH2 + ATP = 2-thiouridine(34) in tRNA + L-cysteinyl-[protein] + A + AMP + diphosphate + H(+). Functionally, catalyzes the 2-thiolation of uridine at the wobble position (U34) of tRNA, leading to the formation of s(2)U34. The chain is tRNA-specific 2-thiouridylase MnmA from Francisella tularensis subsp. holarctica (strain FTNF002-00 / FTA).